Consider the following 273-residue polypeptide: Putative pyruvate, phosphate dikinase regulatory protein (273 aa).

Position 149–156 (149–156) interacts with ADP; it reads GPSRTSKT.

It belongs to the pyruvate, phosphate/water dikinase regulatory protein family. PDRP subfamily.

It catalyses the reaction N(tele)-phospho-L-histidyl/L-threonyl-[pyruvate, phosphate dikinase] + ADP = N(tele)-phospho-L-histidyl/O-phospho-L-threonyl-[pyruvate, phosphate dikinase] + AMP + H(+). The catalysed reaction is N(tele)-phospho-L-histidyl/O-phospho-L-threonyl-[pyruvate, phosphate dikinase] + phosphate + H(+) = N(tele)-phospho-L-histidyl/L-threonyl-[pyruvate, phosphate dikinase] + diphosphate. In terms of biological role, bifunctional serine/threonine kinase and phosphorylase involved in the regulation of the pyruvate, phosphate dikinase (PPDK) by catalyzing its phosphorylation/dephosphorylation. The chain is Putative pyruvate, phosphate dikinase regulatory protein from Rickettsia rickettsii (strain Iowa).